The chain runs to 230 residues: tRNA (guanine-N(7)-)-methyltransferase (230 aa).

S-adenosyl-L-methionine-binding residues include glutamate 61, glutamate 86, aspartate 113, and aspartate 135. Aspartate 135 is an active-site residue. Substrate is bound by residues lysine 139, aspartate 171, and 209–212 (TRYE).

This sequence belongs to the class I-like SAM-binding methyltransferase superfamily. TrmB family.

The enzyme catalyses guanosine(46) in tRNA + S-adenosyl-L-methionine = N(7)-methylguanosine(46) in tRNA + S-adenosyl-L-homocysteine. It participates in tRNA modification; N(7)-methylguanine-tRNA biosynthesis. Its function is as follows. Catalyzes the formation of N(7)-methylguanine at position 46 (m7G46) in tRNA. In Azorhizobium caulinodans (strain ATCC 43989 / DSM 5975 / JCM 20966 / LMG 6465 / NBRC 14845 / NCIMB 13405 / ORS 571), this protein is tRNA (guanine-N(7)-)-methyltransferase.